Reading from the N-terminus, the 41-residue chain is Large ribosomal subunit protein bL36 (41 aa).

The protein belongs to the bacterial ribosomal protein bL36 family.

In Pelagibacter ubique (strain HTCC1062), this protein is Large ribosomal subunit protein bL36.